Reading from the N-terminus, the 301-residue chain is Homoserine O-acetyltransferase (301 aa).

Cysteine 142 serves as the catalytic Acyl-thioester intermediate. Residues lysine 163 and serine 192 each coordinate substrate. Residue histidine 235 is the Proton acceptor of the active site. Glutamate 237 is an active-site residue. Substrate is bound at residue arginine 249.

The protein belongs to the MetA family.

The protein localises to the cytoplasm. It catalyses the reaction L-homoserine + acetyl-CoA = O-acetyl-L-homoserine + CoA. Its pathway is amino-acid biosynthesis; L-methionine biosynthesis via de novo pathway; O-acetyl-L-homoserine from L-homoserine: step 1/1. Transfers an acetyl group from acetyl-CoA to L-homoserine, forming acetyl-L-homoserine. The polypeptide is Homoserine O-acetyltransferase (Bacillus cereus (strain ATCC 14579 / DSM 31 / CCUG 7414 / JCM 2152 / NBRC 15305 / NCIMB 9373 / NCTC 2599 / NRRL B-3711)).